Consider the following 472-residue polypeptide: F-box protein At3g03040 (472 aa).

Residues 1–49 enclose the F-box domain; sequence MDLLSSLPDEVRCLILSFLTTKESASTSVLSKKWRNLFALVPNLDFDDS.

This is F-box protein At3g03040 from Arabidopsis thaliana (Mouse-ear cress).